The sequence spans 322 residues: Mas-related G-protein coupled receptor member X4 (322 aa).

Residues Met1–Thr31 are Extracellular-facing. The N-linked (GlcNAc...) asparagine glycan is linked to Asn25. A helical transmembrane segment spans residues Val32–Leu52. The Cytoplasmic portion of the chain corresponds to Gly53–Ala60. A helical transmembrane segment spans residues Val61 to Ile81. Residues Arg82–Lys96 are Extracellular-facing. A glycan (N-linked (GlcNAc...) asparagine) is linked at Asn89. The helical transmembrane segment at Ile97–Ser117 threads the bilayer. At Thr118–His137 the chain is on the cytoplasmic side. Residues Leu138–Trp158 form a helical membrane-spanning segment. Topologically, residues Arg159–Asp177 are extracellular. The chain crosses the membrane as a helical span at residues Phe178 to Leu198. Topologically, residues Leu199 to Ile218 are cytoplasmic. The chain crosses the membrane as a helical span at residues Leu219–Ile239. Residues Tyr240 to Tyr254 are Extracellular-facing. The helical transmembrane segment at Leu255–Val275 threads the bilayer. The Cytoplasmic segment spans residues Gly276 to Pro322. The tract at residues Pro299–Pro322 is disordered.

Belongs to the G-protein coupled receptor 1 family. Mas subfamily. As to expression, uniquely localized in a subset of small dorsal root and trigeminal sensory neurons.

The protein localises to the cell membrane. Orphan receptor. Probably involved in the function of nociceptive neurons. May regulate nociceptor function and/or development, including the sensation or modulation of pain. Potently activated by enkephalins. The polypeptide is Mas-related G-protein coupled receptor member X4 (MRGPRX4) (Homo sapiens (Human)).